Here is a 480-residue protein sequence, read N- to C-terminus: Glutamyl-tRNA(Gln) amidotransferase subunit A (480 aa).

Active-site charge relay system residues include lysine 74 and serine 149. Serine 173 acts as the Acyl-ester intermediate in catalysis.

It belongs to the amidase family. GatA subfamily. As to quaternary structure, heterotrimer of A, B and C subunits.

The enzyme catalyses L-glutamyl-tRNA(Gln) + L-glutamine + ATP + H2O = L-glutaminyl-tRNA(Gln) + L-glutamate + ADP + phosphate + H(+). Allows the formation of correctly charged Gln-tRNA(Gln) through the transamidation of misacylated Glu-tRNA(Gln) in organisms which lack glutaminyl-tRNA synthetase. The reaction takes place in the presence of glutamine and ATP through an activated gamma-phospho-Glu-tRNA(Gln). This Ruthia magnifica subsp. Calyptogena magnifica protein is Glutamyl-tRNA(Gln) amidotransferase subunit A.